A 113-amino-acid chain; its full sequence is MSEIQNKAETAAQDVQQKLEETKESLQNKGQEVKEQAEASIDNLKNEATPEAEQVKKEEQNIADGVEQKKTEAANKVEETKKQASAAVSEKKETKKEGGFLKKLNRKIASIFN.

Positions 1-16 (MSEIQNKAETAAQDVQ) are enriched in polar residues. The segment at 1 to 96 (MSEIQNKAET…AVSEKKETKK (96 aa)) is disordered. S2 bears the N-acetylserine mark. S2 carries the phosphoserine modification. A coiled-coil region spans residues 2–97 (SEIQNKAETA…VSEKKETKKE (96 aa)). The segment covering 17-37 (QKLEETKESLQNKGQEVKEQA) has biased composition (basic and acidic residues). Residues K18 and K23 each participate in a glycyl lysine isopeptide (Lys-Gly) (interchain with G-Cter in ubiquitin) cross-link. Phosphoserine is present on S25. Residues K29 and K34 each participate in a glycyl lysine isopeptide (Lys-Gly) (interchain with G-Cter in ubiquitin) cross-link. Phosphoserine is present on S40. A Glycyl lysine isopeptide (Lys-Gly) (interchain with G-Cter in ubiquitin) cross-link involves residue K45. T49 carries the phosphothreonine modification. Residues 53–82 (EQVKKEEQNIADGVEQKKTEAANKVEETKK) are compositionally biased toward basic and acidic residues. Residues K57 and K82 each participate in a glycyl lysine isopeptide (Lys-Gly) (interchain with G-Cter in ubiquitin) cross-link.

Interacts with MID2. Phosphorylation of Ser-25 is induced 2-fold in response to mating pheromone.

The protein resides in the cell membrane. Its function is as follows. Acts antagonistically to MID2 in signaling cell wall stress to the PKC1-MPK1 cell integrity pathway. The polypeptide is Protein ZEO1 (ZEO1) (Saccharomyces cerevisiae (strain ATCC 204508 / S288c) (Baker's yeast)).